We begin with the raw amino-acid sequence, 796 residues long: Quinoprotein glucose dehydrogenase (796 aa).

Residues 1–10 (MAINNTGSRR) are Cytoplasmic-facing. A helical transmembrane segment spans residues 11–37 (LLVTLTALFAALCGLYLLIGGGWLVAI). The Periplasmic portion of the chain corresponds to 38 to 40 (GGS). The helical transmembrane segment at 41-58 (WYYPIAGLVMLGVAWMLW) threads the bilayer. The Cytoplasmic segment spans residues 59–62 (RSKR). The helical transmembrane segment at 63-81 (AALWLYAALLLGTMIWGVW) threads the bilayer. Topologically, residues 82 to 95 (EVGFDFWALTPRSD) are periplasmic. Residues 96–110 (ILVFFGIWLILPFVW) traverse the membrane as a helical segment. Residues 111–118 (RRLVIPAS) lie on the Cytoplasmic side of the membrane. The helical transmembrane segment at 119 to 141 (GAVAALVVALLISGGILTWAGFN) threads the bilayer. Residues 142–796 (DPQEINGTLS…VAYALPDDVK (655 aa)) lie on the Periplasmic side of the membrane. Catalysis depends on Asp-466, which acts as the Proton acceptor.

This sequence belongs to the bacterial PQQ dehydrogenase family. In terms of assembly, monomer. It depends on pyrroloquinoline quinone as a cofactor.

The protein localises to the cell inner membrane. The catalysed reaction is a ubiquinone + D-glucose = D-glucono-1,5-lactone + a ubiquinol. GDH is probably involved in energy conservation rather than in sugar metabolism. The chain is Quinoprotein glucose dehydrogenase (gcd) from Escherichia coli (strain K12).